Here is a 221-residue protein sequence, read N- to C-terminus: Tetraspanin-2 (221 aa).

Topologically, residues 1-13 (MGRFRGGLRCIKY) are cytoplasmic. The chain crosses the membrane as a helical span at residues 14–34 (LLLGFNLLFWLAGSAVIAFGL). Residues 35-54 (WFRFGGTIKDLSSEEKSPEY) lie on the Extracellular side of the membrane. A helical membrane pass occupies residues 55–75 (FYVGLYVLVGAGALMMAVGFF). The Cytoplasmic portion of the chain corresponds to 76 to 90 (GCCGAMRESQCVLGS). Residues 91 to 111 (FFTCLLVIFAAEVTTGVFAFI) traverse the membrane as a helical segment. The Extracellular segment spans residues 112-188 (GKDVAIRHVQ…ETIISVKLQL (77 aa)). Residue Asn139 is glycosylated (N-linked (GlcNAc...) asparagine). The chain crosses the membrane as a helical span at residues 189 to 209 (IGIVGIGIAGLTIFGMIFSMV). At 210–221 (LCCAIRNSRDVI) the chain is on the cytoplasmic side.

The protein belongs to the tetraspanin (TM4SF) family. Expression is restricted to the nervous system.

It localises to the membrane. May play a role in signalling in oligodendrocytes in the early stages of their terminal differentiation into myelin-forming glia and may also function in stabilizing the mature sheath. The polypeptide is Tetraspanin-2 (Tspan2) (Rattus norvegicus (Rat)).